The primary structure comprises 194 residues: Leucyl/phenylalanyl-tRNA--protein transferase (194 aa).

The protein belongs to the L/F-transferase family.

The protein resides in the cytoplasm. It carries out the reaction N-terminal L-lysyl-[protein] + L-leucyl-tRNA(Leu) = N-terminal L-leucyl-L-lysyl-[protein] + tRNA(Leu) + H(+). The catalysed reaction is N-terminal L-arginyl-[protein] + L-leucyl-tRNA(Leu) = N-terminal L-leucyl-L-arginyl-[protein] + tRNA(Leu) + H(+). The enzyme catalyses L-phenylalanyl-tRNA(Phe) + an N-terminal L-alpha-aminoacyl-[protein] = an N-terminal L-phenylalanyl-L-alpha-aminoacyl-[protein] + tRNA(Phe). Functions in the N-end rule pathway of protein degradation where it conjugates Leu, Phe and, less efficiently, Met from aminoacyl-tRNAs to the N-termini of proteins containing an N-terminal arginine or lysine. The protein is Leucyl/phenylalanyl-tRNA--protein transferase of Pelodictyon phaeoclathratiforme (strain DSM 5477 / BU-1).